The sequence spans 353 residues: Methylthioribose-1-phosphate isomerase (353 aa).

Asp241 serves as the catalytic Proton donor.

The protein belongs to the eIF-2B alpha/beta/delta subunits family. MtnA subfamily.

It localises to the cytoplasm. It is found in the nucleus. The enzyme catalyses 5-(methylsulfanyl)-alpha-D-ribose 1-phosphate = 5-(methylsulfanyl)-D-ribulose 1-phosphate. Its pathway is amino-acid biosynthesis; L-methionine biosynthesis via salvage pathway; L-methionine from S-methyl-5-thio-alpha-D-ribose 1-phosphate: step 1/6. Functionally, catalyzes the interconversion of methylthioribose-1-phosphate (MTR-1-P) into methylthioribulose-1-phosphate (MTRu-1-P). The sequence is that of Methylthioribose-1-phosphate isomerase (mri1) from Danio rerio (Zebrafish).